A 301-amino-acid chain; its full sequence is uncharacterized protein (301 aa).

The a divalent metal cation site is built by E146, E148, and D177.

It belongs to the FAH family.

This is an uncharacterized protein from Staphylococcus saprophyticus subsp. saprophyticus (strain ATCC 15305 / DSM 20229 / NCIMB 8711 / NCTC 7292 / S-41).